The primary structure comprises 658 residues: Biosynthetic arginine decarboxylase (658 aa).

Lys127 carries the N6-(pyridoxal phosphate)lysine modification. Substrate is bound at residue Phe307–Tyr317.

Belongs to the Orn/Lys/Arg decarboxylase class-II family. SpeA subfamily. In terms of assembly, homotetramer. Mg(2+) is required as a cofactor. The cofactor is pyridoxal 5'-phosphate.

The protein localises to the periplasm. The catalysed reaction is L-arginine + H(+) = agmatine + CO2. It functions in the pathway amine and polyamine biosynthesis; agmatine biosynthesis; agmatine from L-arginine: step 1/1. Catalyzes the biosynthesis of agmatine from arginine. This chain is Biosynthetic arginine decarboxylase (speA), found in Escherichia coli O157:H7.